A 228-amino-acid chain; its full sequence is Ribonuclease 3 (228 aa).

The RNase III domain occupies 5–134 (RSKLEKDYGI…FLGALLLDKG (130 aa)). Glu-47 is a binding site for Mg(2+). Asp-51 is an active-site residue. Asp-120 and Glu-123 together coordinate Mg(2+). Glu-123 is an active-site residue. The 69-residue stretch at 160-228 (DYKTSLQELL…AAKNALATLQ (69 aa)) folds into the DRBM domain.

This sequence belongs to the ribonuclease III family. In terms of assembly, homodimer. Requires Mg(2+) as cofactor.

The protein resides in the cytoplasm. The catalysed reaction is Endonucleolytic cleavage to 5'-phosphomonoester.. Functionally, digests double-stranded RNA. Involved in the processing of primary rRNA transcript to yield the immediate precursors to the large and small rRNAs (23S and 16S). Processes some mRNAs, and tRNAs when they are encoded in the rRNA operon. Processes pre-crRNA and tracrRNA of type II CRISPR loci if present in the organism. This Streptococcus agalactiae serotype III (strain NEM316) protein is Ribonuclease 3.